We begin with the raw amino-acid sequence, 226 residues long: Type-5 uracil-DNA glycosylase (226 aa).

The [4Fe-4S] cluster site is built by Cys-23, Cys-26, Cys-125, and Cys-140.

Belongs to the uracil-DNA glycosylase (UDG) superfamily. Type 5 (UDGb) family.

Its function is as follows. DNA glycosylase with broad substrate specificity. Can remove uracil from double-stranded DNA containing either a U/G or U/A base pair. Can also process hydroxymethyluracil (mispaired with guanine or adenine), hypoxanthine and fluorouracil. Exhibits a clear preference for double-stranded DNA substrates, but can also process uracil in single-stranded DNA, with lower efficiency. In Pyrobaculum aerophilum (strain ATCC 51768 / DSM 7523 / JCM 9630 / CIP 104966 / NBRC 100827 / IM2), this protein is Type-5 uracil-DNA glycosylase.